The sequence spans 265 residues: Indole-3-glycerol phosphate synthase (265 aa).

Belongs to the TrpC family.

The enzyme catalyses 1-(2-carboxyphenylamino)-1-deoxy-D-ribulose 5-phosphate + H(+) = (1S,2R)-1-C-(indol-3-yl)glycerol 3-phosphate + CO2 + H2O. It functions in the pathway amino-acid biosynthesis; L-tryptophan biosynthesis; L-tryptophan from chorismate: step 4/5. In Syntrophobacter fumaroxidans (strain DSM 10017 / MPOB), this protein is Indole-3-glycerol phosphate synthase.